Reading from the N-terminus, the 884-residue chain is Alanine--tRNA ligase (884 aa).

Histidine 568, histidine 572, cysteine 670, and histidine 674 together coordinate Zn(2+).

This sequence belongs to the class-II aminoacyl-tRNA synthetase family. Zn(2+) is required as a cofactor.

It is found in the cytoplasm. The enzyme catalyses tRNA(Ala) + L-alanine + ATP = L-alanyl-tRNA(Ala) + AMP + diphosphate. Functionally, catalyzes the attachment of alanine to tRNA(Ala) in a two-step reaction: alanine is first activated by ATP to form Ala-AMP and then transferred to the acceptor end of tRNA(Ala). Also edits incorrectly charged Ser-tRNA(Ala) and Gly-tRNA(Ala) via its editing domain. The polypeptide is Alanine--tRNA ligase (Synechococcus sp. (strain JA-2-3B'a(2-13)) (Cyanobacteria bacterium Yellowstone B-Prime)).